The primary structure comprises 556 residues: MSDTENRPTNFIRNIIDADLDSGKHTGVQTRFPPEPNGFLHIGHAKAICLNFGIAQDYNGLCNLRFDDTNPEKEDIDYVHAIQKDVKWLGFEWAGEIHYSSNYFDQLHGFAVELIEKGLAYVCFLNAEETREYRGTLNKPGKNSPYRDTSVEENLALFAKMKNGEFEEGICALRAKIDMTSSFMCLRDPIIYRVRFAHHHQTGDKWCIYPMYDFTHCLSDALEGITHSICTLEFQDNRRLYDWVIEQVSVPSTPHQYEFSRLNLEYTLMSKRKLNTLVEEKLVDSWDDPRMPTIAAFRRRGYTPASMREFAKRIGVTKMENTIEMSVLEACIREDLNDNAPRAMAVLDPIKLVIENYPEDKNEDLIVKNHPSDDEQGTRIVPFSKELYIEAEDFREEANKKYKRLVIDKAVRLRGAYVVTATRCDKDEQGNVTTVYCTYNEDTLGKNPTDGTKPKGVIHWVDANKSLDAIVRLYDRLFTVPNPAAADDFNSVINPQSLVTITGAKVEPSLAEAKPEFAYQFERQGYFCLDNDIKEPGALVFNRTVGLRDTWAKISQ.

The 'HIGH' region signature appears at 34–44 (PEPNGFLHIGH). ATP-binding positions include 35–37 (EPN) and 41–47 (HIGHAKA). Residues aspartate 67 and tyrosine 212 each contribute to the L-glutamine site. ATP contacts are provided by residues threonine 231, 261 to 262 (RL), and 269 to 271 (MSK). Positions 268-272 (LMSKR) match the 'KMSKS' region motif.

Belongs to the class-I aminoacyl-tRNA synthetase family. Monomer.

The protein resides in the cytoplasm. It catalyses the reaction tRNA(Gln) + L-glutamine + ATP = L-glutaminyl-tRNA(Gln) + AMP + diphosphate. This chain is Glutamine--tRNA ligase, found in Colwellia psychrerythraea (strain 34H / ATCC BAA-681) (Vibrio psychroerythus).